The chain runs to 453 residues: MARLFGTDGVRGVANRDLTAELALALGSAAARRLSTITTATATDSAERARRVAVVGRDPRASGEMLEAAVIAGLTSEGVDALRVGVLPTPAVAYLTSAYDADFGVMISASHNPMPDNGIKIFGPGGHKLDDATEDRIEELVHAGAVARPTGTGIGRVLDAEDALDRYLRHAGKAVTTRLDGLTVVVDCAHGAAWAAAPRAYRAAGANVIAINAEPTGLNINDNCGSTHMDVVRAAVVEHGADLGLAHDGDADRCLAVDATGHVVDGDAIMVILALAMQEAGELAANTLVATVMSNLGLHLAMRAAGIDVRTTSVGDRYVLEELRSGEFSLGGEQSGHIVMPSFGTTGDGIVTGLRLMSRMAQTGSSLAELADAMHSLPQVLINVAVADKTTVAQAPSVRSAVAAAEAELGDTGRILLRPSGTEQVVRVMVEAADEDTARQVAARVAESVSLQG.

The active-site Phosphoserine intermediate is Ser-110. Residues Ser-110, Asp-248, Asp-250, and Asp-252 each contribute to the Mg(2+) site. At Ser-110 the chain carries Phosphoserine.

This sequence belongs to the phosphohexose mutase family. Mg(2+) is required as a cofactor. Post-translationally, activated by phosphorylation.

The enzyme catalyses alpha-D-glucosamine 1-phosphate = D-glucosamine 6-phosphate. Catalyzes the conversion of glucosamine-6-phosphate to glucosamine-1-phosphate. The polypeptide is Phosphoglucosamine mutase (Mycolicibacterium smegmatis (strain ATCC 700084 / mc(2)155) (Mycobacterium smegmatis)).